Here is a 369-residue protein sequence, read N- to C-terminus: Porphobilinogen deaminase, chloroplastic (369 aa).

The transit peptide at 1–46 (MEMTLYSSSSFSLPSAPSNPSLSLFTSSFRFSSFKTSPFSKCRIRA) directs the protein to the chloroplast. Position 303 is an S-(dipyrrolylmethanemethyl)cysteine (Cys303).

It belongs to the HMBS family. Requires dipyrromethane as cofactor.

Its subcellular location is the plastid. The protein localises to the chloroplast. The catalysed reaction is 4 porphobilinogen + H2O = hydroxymethylbilane + 4 NH4(+). It functions in the pathway porphyrin-containing compound metabolism; protoporphyrin-IX biosynthesis; coproporphyrinogen-III from 5-aminolevulinate: step 2/4. Its pathway is porphyrin-containing compound metabolism; chlorophyll biosynthesis. Tetrapolymerization of the monopyrrole PBG into the hydroxymethylbilane pre-uroporphyrinogen in several discrete steps. In Pisum sativum (Garden pea), this protein is Porphobilinogen deaminase, chloroplastic (HEMC).